The sequence spans 404 residues: uncharacterized protein (404 aa).

11 consecutive transmembrane segments (helical) span residues 9 to 29, 36 to 56, 76 to 96, 103 to 123, 135 to 155, 162 to 182, 199 to 219, 236 to 256, 288 to 308, 319 to 339, and 366 to 386; these read IYLI…PYLS, GFGE…FIGL, LVVK…LLFC, IMFY…QLSI, FIQV…LEFY, KRIL…YLIY, AFFY…SFFI, LGLY…ILAI, IVPI…LFFL, IIVF…VNYL, and LIFT…LGIL.

This sequence belongs to the polysaccharide synthase family. HI_0867/HI_1700 subfamily.

It is found in the cell membrane. This is an uncharacterized protein from Haemophilus influenzae (strain ATCC 51907 / DSM 11121 / KW20 / Rd).